Reading from the N-terminus, the 369-residue chain is Septin-5 (369 aa).

Residue Thr-13 is modified to Phosphothreonine. The Septin-type G domain occupies 41-314; the sequence is KGFDFTLMVA…ENYRAHCIQQ (274 aa). A G1 motif region spans residues 51–58; the sequence is GESGLGKS. Residues 51-58, Thr-85, and Gly-111 each bind GTP; that span reads GESGLGKS. Residues 108 to 111 form a G3 motif region; sequence DTPG. At Arg-168 the chain carries Omega-N-methylarginine. The segment at 189–192 is G4 motif; that stretch reads AKAD. Position 190-198 (190-198) interacts with GTP; that stretch reads KADCLVPSE. Ser-225 is modified (phosphoserine). Residues Gly-248 and Arg-263 each coordinate GTP. A Phosphoserine modification is found at Ser-327. Thr-336 is modified (phosphothreonine). Residues 338 to 369 are a coiled coil; sequence DAETEKLIRMKDEELRRMQEMLQKMKQQMQDQ.

It belongs to the TRAFAC class TrmE-Era-EngA-EngB-Septin-like GTPase superfamily. Septin GTPase family. In terms of assembly, septins polymerize into heterooligomeric protein complexes that form filaments, and can associate with cellular membranes, actin filaments and microtubules. GTPase activity is required for filament formation. Interacts with SEPTIN2 and SEPTIN5. Interaction with SEPTIN4 not detected. In platelets, associated with a complex containing STX4. Interacts with PRKN; this interaction leads to SEPTIN5 ubiquitination and degradation. Interacts with DYRK1A. Interacts with STX1A; in the cerebellar cortex. In terms of processing, phosphorylated by DYRK1A.

It localises to the cytoplasm. The protein resides in the cytoskeleton. In terms of biological role, filament-forming cytoskeletal GTPase. Involved in cytokinesis (Potential). May play a role in platelet secretion. The polypeptide is Septin-5 (Mus musculus (Mouse)).